Reading from the N-terminus, the 63-residue chain is MRFRRLTPGYFRVLQMQVAGELKAEPRSLLAGVVATVLAVLGLGGSCYAVWKMVGQRRVPRAP.

Residues 30–50 (LAGVVATVLAVLGLGGSCYAV) form a helical membrane-spanning segment.

The protein localises to the membrane. In Homo sapiens (Human), this protein is Transmembrane protein ZNF593OS.